Reading from the N-terminus, the 385-residue chain is MSANGKISVPEAVVNWLFKVIQPIYNDGRTTFHDSLALLDNFHSLRPRTRVFTHSDGTPQLLLSIYGTISTGEDGSSPHSIPVIMWVPSMYPVKPPFISINLENFDMNTISSSLPIQEYIDSNGWIALPILHCWDPAAMNLIMVVQELMSLLHEPPQDQAPSLPPKPNTQLQQEQNTPPLPPKPKSPHLKPPLPPPPPPQPASNALDLMDMDNTDISPTNHHEMLQNLQTVVNELYREDVDYVADKILTRQTVMQESIARFHEIIAIDKNHLRAVEQAIEQTMHSLNAQIDVLTANRAKVQQFSSTSHVDDEDVNSIAVAKTDGLNQLYNLVAQDYALTDTIECLSRMLHRGTIPLDTFVKQGRELARQQFLVRWHIQRITSPLS.

The 150-residue stretch at 12 to 161 folds into the UEV domain; the sequence is AVVNWLFKVI…LHEPPQDQAP (150 aa). The interval 155–219 is disordered; it reads PPQDQAPSLP…DMDNTDISPT (65 aa). Residues 168 to 177 show a composition bias toward polar residues; it reads NTQLQQEQNT. Residues 178-201 are compositionally biased toward pro residues; the sequence is PPLPPKPKSPHLKPPLPPPPPPQP. Residues 272–300 adopt a coiled-coil conformation; the sequence is LRAVEQAIEQTMHSLNAQIDVLTANRAKV. An SB domain is found at 322 to 385; it reads TDGLNQLYNL…HIQRITSPLS (64 aa).

It belongs to the ubiquitin-conjugating enzyme family. UEV subfamily. In terms of assembly, component of the ESCRT-I complex (endosomal sorting complex required for transport I) which consists of STP22, VPS28, SRN2 and MVB12 in a 1:1:1:1 stoichiometry. Interacts with HSE1 and VPS27. Interacts with MVB12 and SRN2.

The protein localises to the cytoplasm. It localises to the endosome. It is found in the late endosome membrane. Component of the ESCRT-I complex, a regulator of vesicular trafficking process. Binds to ubiquitinated cargo proteins and is required for the sorting of endocytic ubiquitinated cargos into multivesicular bodies (MVBs). Mediates the association to the ESCRT-0 complex. Required for vacuolar targeting of temperature-sensitive plasma membrane proteins STE2 and CAN1. This Saccharomyces cerevisiae (strain ATCC 204508 / S288c) (Baker's yeast) protein is Suppressor protein STP22 of temperature-sensitive alpha-factor receptor and arginine permease (STP22).